The chain runs to 348 residues: Ribosomal RNA small subunit methyltransferase C (348 aa).

The protein belongs to the methyltransferase superfamily. RsmC family. In terms of assembly, monomer.

Its subcellular location is the cytoplasm. The enzyme catalyses guanosine(1207) in 16S rRNA + S-adenosyl-L-methionine = N(2)-methylguanosine(1207) in 16S rRNA + S-adenosyl-L-homocysteine + H(+). Specifically methylates the guanine in position 1207 of 16S rRNA in the 30S particle. This is Ribosomal RNA small subunit methyltransferase C from Pectobacterium atrosepticum (strain SCRI 1043 / ATCC BAA-672) (Erwinia carotovora subsp. atroseptica).